A 447-amino-acid polypeptide reads, in one-letter code: N-succinylarginine dihydrolase (447 aa).

Substrate contacts are provided by residues 19–28, Asn110, and 137–138; these read AGLSFGNEAS and HR. The active site involves Glu174. Substrate is bound at residue Arg212. His248 is an active-site residue. Positions 250 and 359 each coordinate substrate. Catalysis depends on Cys365, which acts as the Nucleophile.

The protein belongs to the succinylarginine dihydrolase family. In terms of assembly, homodimer.

The catalysed reaction is N(2)-succinyl-L-arginine + 2 H2O + 2 H(+) = N(2)-succinyl-L-ornithine + 2 NH4(+) + CO2. The protein operates within amino-acid degradation; L-arginine degradation via AST pathway; L-glutamate and succinate from L-arginine: step 2/5. In terms of biological role, catalyzes the hydrolysis of N(2)-succinylarginine into N(2)-succinylornithine, ammonia and CO(2). This is N-succinylarginine dihydrolase from Citrobacter koseri (strain ATCC BAA-895 / CDC 4225-83 / SGSC4696).